The primary structure comprises 82 residues: Small ribosomal subunit protein uS17 (82 aa).

This sequence belongs to the universal ribosomal protein uS17 family. In terms of assembly, part of the 30S ribosomal subunit.

In terms of biological role, one of the primary rRNA binding proteins, it binds specifically to the 5'-end of 16S ribosomal RNA. In Azorhizobium caulinodans (strain ATCC 43989 / DSM 5975 / JCM 20966 / LMG 6465 / NBRC 14845 / NCIMB 13405 / ORS 571), this protein is Small ribosomal subunit protein uS17.